Reading from the N-terminus, the 181-residue chain is 3-hydroxyanthranilate 3,4-dioxygenase (181 aa).

Arg46 serves as a coordination point for O2. Fe cation-binding residues include His50, Glu56, and His95. Substrate is bound at residue Glu56. Substrate contacts are provided by Arg99 and Glu109.

The protein belongs to the 3-HAO family. The cofactor is Fe(2+).

Its subcellular location is the cytoplasm. It catalyses the reaction 3-hydroxyanthranilate + O2 = (2Z,4Z)-2-amino-3-carboxymuconate 6-semialdehyde. The protein operates within cofactor biosynthesis; NAD(+) biosynthesis; quinolinate from L-kynurenine: step 3/3. Catalyzes the oxidative ring opening of 3-hydroxyanthranilate to 2-amino-3-carboxymuconate semialdehyde, which spontaneously cyclizes to quinolinate. This is 3-hydroxyanthranilate 3,4-dioxygenase from Mycosarcoma maydis (Corn smut fungus).